The sequence spans 89 residues: Small ribosomal subunit protein uS14 (89 aa).

The protein belongs to the universal ribosomal protein uS14 family. As to quaternary structure, part of the 30S ribosomal subunit. Contacts proteins S3 and S10.

Functionally, binds 16S rRNA, required for the assembly of 30S particles and may also be responsible for determining the conformation of the 16S rRNA at the A site. The chain is Small ribosomal subunit protein uS14 from Oenococcus oeni (strain ATCC BAA-331 / PSU-1).